Consider the following 64-residue polypeptide: uncharacterized protein (64 aa).

This is an uncharacterized protein from Escherichia coli O157:H7.